A 452-amino-acid polypeptide reads, in one-letter code: uncharacterized protein (452 aa).

Helical transmembrane passes span 18 to 38 (PIIESDLEVIVIALGGYVLAK), 81 to 101 (LLPVFYVIISAASILISFLLA), 269 to 289 (IVLLLDFFSPPLYSLFIALFI), 317 to 337 (AGQVAVPMILVVLGASLATDI), 354 to 374 (VIIVCLLGRMVVVPLALLPAF), 390 to 410 (VFVVVIFLLVGSPTAIQLTQI), and 428 to 448 (SYAVFTPPNSLLLAFASLLVV).

The protein belongs to the auxin efflux carrier (TC 2.A.69) family.

Its subcellular location is the membrane. This is an uncharacterized protein from Schizosaccharomyces pombe (strain 972 / ATCC 24843) (Fission yeast).